The primary structure comprises 607 residues: ATP-dependent RNA helicase DBP6 (607 aa).

The disordered stretch occupies residues 1-83 (MFAARFDPSR…GTGEADKRHQ (83 aa)). Over residues 34 to 59 (QDESESEMSSAESEDEAMQLDDEEEV) the composition is skewed to acidic residues. Positions 60 to 69 (VDSKGKENHG) are enriched in basic and acidic residues. The Q motif signature appears at 184 to 192 (AFPIQTALL). Residues 208 to 388 (RYYTRKVGDI…DLQLHNPKLF (181 aa)) form the Helicase ATP-binding domain. 221–228 (ASTGSGKT) serves as a coordination point for ATP. Residues 328–331 (DEAD) carry the DEAD box motif. The Helicase C-terminal domain occupies 419 to 578 (ILLRLLPLLS…GSHLFFDEEQ (160 aa)).

It belongs to the DEAD box helicase family. DDX51/DBP6 subfamily. In terms of assembly, associated with pre-ribosomal particles.

The protein resides in the nucleus. It is found in the nucleolus. The catalysed reaction is ATP + H2O = ADP + phosphate + H(+). In terms of biological role, ATP-binding RNA helicase involved in the biogenesis of 60S ribosomal subunits and is required for the normal formation of 25S and 5.8S rRNAs. The chain is ATP-dependent RNA helicase DBP6 (DBP6) from Eremothecium gossypii (strain ATCC 10895 / CBS 109.51 / FGSC 9923 / NRRL Y-1056) (Yeast).